The chain runs to 257 residues: Triosephosphate isomerase (257 aa).

2 residues coordinate substrate: N11 and K13. H96 acts as the Electrophile in catalysis. E170 acts as the Proton acceptor in catalysis.

Belongs to the triosephosphate isomerase family. As to quaternary structure, homodimer.

Its subcellular location is the cytoplasm. It carries out the reaction D-glyceraldehyde 3-phosphate = dihydroxyacetone phosphate. It catalyses the reaction dihydroxyacetone phosphate = methylglyoxal + phosphate. Its pathway is carbohydrate biosynthesis; gluconeogenesis. The protein operates within carbohydrate degradation; glycolysis; D-glyceraldehyde 3-phosphate from glycerone phosphate: step 1/1. Its function is as follows. Triosephosphate isomerase is an extremely efficient metabolic enzyme that catalyzes the interconversion between dihydroxyacetone phosphate (DHAP) and D-glyceraldehyde-3-phosphate (G3P) in glycolysis and gluconeogenesis. It is also responsible for the non-negligible production of methylglyoxal a reactive cytotoxic side-product that modifies and can alter proteins, DNA and lipids. The protein is Triosephosphate isomerase of Giardia intestinalis (Giardia lamblia).